A 546-amino-acid chain; its full sequence is Probable lysosomal cobalamin transporter (546 aa).

4 helical membrane passes run 8–28 (LAQGWIPFTVVVVLAILFSWF), 48–68 (IIALFIALMTTALVPVDIFLV), 102–122 (ILYALLAFFVFVIIPFMYFFF), and 141–161 (YSIGFLIVASVLLLVGAFAPL). N-linked (GlcNAc...) asparagine glycosylation occurs at Asn-167. 4 consecutive transmembrane segments (helical) span residues 189-209 (TALSLLIGFLTLIGMLIMITY), 304-324 (MVFGAFFLLVALLIFVSLFIT), 352-372 (IIMVYAQIVFPLDYCLFLLVV), and 407-427 (ALLFMCVMLMLIVLSLNVMLF). N-linked (GlcNAc...) asparagine glycosylation is found at Asn-444, Asn-452, and Asn-459. The helical transmembrane segment at 495-515 (VWFFGACYYWGTWLFLVVFMT) threads the bilayer.

The protein belongs to the LIMR family. LMBRD1 subfamily.

It localises to the lysosome membrane. Functionally, probable lysosomal cobalamin transporter. Required to export cobalamin from lysosomes allowing its conversion to cofactors. The chain is Probable lysosomal cobalamin transporter from Nematostella vectensis (Starlet sea anemone).